The primary structure comprises 453 residues: Cytochrome P450 monooxygenase PC-20 (453 aa).

2 helical membrane-spanning segments follow: residues 5-25 and 49-69; these read LGPF…LCVI and LGVV…LFCV. Cysteine 387 serves as a coordination point for heme.

The protein belongs to the cytochrome P450 family. It depends on heme as a cofactor.

The protein resides in the membrane. The protein operates within secondary metabolite biosynthesis. Functionally, cytochrome P450 monooxygenase; part of the gene cluster that mediates the biosynthesis of the indole diterpenes penitrems. The geranylgeranyl diphosphate (GGPP) synthase penG catalyzes the first step in penitrem biosynthesis via conversion of farnesyl pyrophosphate and isopentyl pyrophosphate into geranylgeranyl pyrophosphate (GGPP). Condensation of indole-3-glycerol phosphate with GGPP by the prenyl transferase penC then forms 3-geranylgeranylindole (3-GGI). Epoxidation by the FAD-dependent monooxygenase penM leads to a epoxidized-GGI that is substrate of the terpene cyclase penB for cyclization to yield paspaline. Paspaline is subsequently converted to 13-desoxypaxilline by the cytochrome P450 monooxygenase penP, the latter being then converted to paxilline by the cytochrome P450 monooxygenase penQ. Paxilline is converted to beta-paxitriol via C-10 ketoreduction by the short-chain dehydrogenase PC-15 which can be monoprenylated at the C-20 by the indole diterpene prenyltransferase penD. A two-step elimination (acetylation and elimination) process performed by the O-acetyltransferase PC-16 and the P.simplicissimum ptmI-ortholog not yet identified in P.crustosum, leads to the production of the prenylated form of penijanthine. The FAD-linked oxidoreductase ptmO then converts the prenylated form of penijanthine into PC-M5 which is in turn transformed into PC-M4 by the aromatic dimethylallyltransferase PC-22. A series of oxidation steps involving 4 cytochrome P450 monooxygenases (PC-21, PC-05, PC-23, PC-20) and a FAD-dependent monooxygenase (PC-14) are required for the transformation of PC-M4 to penitrems A and E. Synthesis of these final products is proposed to proceed via penitrems D and C (PC-21, PC-05, PC-14) and penitrems B and F (PC-21, PC-05, PC-14, PC-23). This chain is Cytochrome P450 monooxygenase PC-20, found in Penicillium crustosum (Blue mold fungus).